The chain runs to 299 residues: Acetylglutamate kinase (299 aa).

Residues 68–69, arginine 90, and asparagine 194 each bind substrate; that span reads GG.

Belongs to the acetylglutamate kinase family. ArgB subfamily.

It is found in the cytoplasm. The catalysed reaction is N-acetyl-L-glutamate + ATP = N-acetyl-L-glutamyl 5-phosphate + ADP. The protein operates within amino-acid biosynthesis; L-arginine biosynthesis; N(2)-acetyl-L-ornithine from L-glutamate: step 2/4. Functionally, catalyzes the ATP-dependent phosphorylation of N-acetyl-L-glutamate. In Psychrobacter cryohalolentis (strain ATCC BAA-1226 / DSM 17306 / VKM B-2378 / K5), this protein is Acetylglutamate kinase.